Consider the following 417-residue polypeptide: DNA primase small subunit (417 aa).

Position 1 is an N-acetylmethionine (Met-1). Catalysis depends on residues Glu-44, Asp-109, and Asp-111. Mg(2+)-binding residues include Asp-109 and Asp-111. Residues Asp-109 and Asp-111 each coordinate Mn(2+). Residue 109 to 111 (DID) participates in a ribonucleoside 5'-triphosphate binding. 4 residues coordinate Zn(2+): Cys-121, Cys-122, Cys-128, and Cys-131. The short motif at 121-131 (CCSSADICSKC) is the Zinc knuckle motif element. Position 160–166 (160–166 (SGRRGVH)) interacts with a ribonucleoside 5'-triphosphate. Asp-305 serves as a coordination point for Mg(2+). Asp-305 contacts Mn(2+). Residues 314-317 (HLLK) and His-323 contribute to the a ribonucleoside 5'-triphosphate site.

It belongs to the eukaryotic-type primase small subunit family. Heterodimer of a catalytic subunit PRIM1 and a regulatory subunit PRIM2, also known as the DNA primase complex. Interacts with PRIM2/p58 (via C-terminus). Component of the alpha DNA polymerase complex (also known as the alpha DNA polymerase-primase complex) consisting of four subunits: the catalytic subunit POLA1, the regulatory subunit POLA2, and the primase complex subunits PRIM1 and PRIM2 respectively. Within the complex, POLA1 directly interacts with PRIM2. Requires Mg(2+) as cofactor. It depends on Mn(2+) as a cofactor.

The catalysed reaction is ssDNA + n NTP = ssDNA/pppN(pN)n-1 hybrid + (n-1) diphosphate.. The presence of the regulatory subunit PRIM2/p58 accelerates the kinetics of initiation and primer extension. In terms of biological role, catalytic subunit of the DNA primase complex and component of the DNA polymerase alpha complex (also known as the alpha DNA polymerase-primase complex) which play an essential role in the initiation of DNA synthesis. During the S phase of the cell cycle, the DNA polymerase alpha complex (composed of a catalytic subunit POLA1, an accessory subunit POLA2 and two primase subunits, the catalytic subunit PRIM1 and the regulatory subunit PRIM2) is recruited to DNA at the replicative forks via direct interactions with MCM10 and WDHD1. The primase subunit of the polymerase alpha complex initiates DNA synthesis by oligomerising short RNA primers on both leading and lagging strands. These primers are initially extended by the polymerase alpha catalytic subunit and subsequently transferred to polymerase delta and polymerase epsilon for processive synthesis on the lagging and leading strand, respectively. In the primase complex, both subunits are necessary for the initial di-nucleotide formation, but the extension of the primer depends only on the catalytic subunit. Can add both ribo- and deoxynucleotides during elongation of the primers. Synthesizes 9-mer RNA primers (also known as the 'unit length' RNA primers). Incorporates only ribonucleotides in the presence of ribo- and deoxy-nucleotide triphosphates (rNTPs, dNTPs). Requires template thymine or cytidine to start the RNA primer synthesis, with an adenine or guanine at its 5'-end. Binds single stranded DNA. This chain is DNA primase small subunit (Prim1), found in Mus musculus (Mouse).